Here is a 715-residue protein sequence, read N- to C-terminus: Tensin-4 (715 aa).

A signal peptide spans 1 to 18 (MSQVMSSPLLAGGHAVSL). At serine 82 the chain carries Phosphoserine. 4 disordered regions span residues 159–183 (RCHD…RSGG), 195–251 (RSSS…SPLV), 291–364 (SLLH…CPPS), and 376–435 (LING…ARDM). Positions 197–206 (SSESLIFSGN) are enriched in polar residues. Phosphoserine is present on serine 248. A compositionally biased stretch (low complexity) spans 291 to 325 (SLLHSSNSSHQSSSRSLESPANSSSSLHSLGSVSL). The SH2 domain occupies 449–556 (WFKPNITREQ…ALPCKLTIPQ (108 aa)). Residues 582–705 (CHTLYLSSVS…QPASQVIGLV (124 aa)) enclose the PTB domain.

This sequence belongs to the PTEN phosphatase protein family. As to quaternary structure, interacts (via SH2 domain) with Rho GTPase-activating protein DLC1 (via C-terminus); the interaction is independent of DLC1 tyrosine phosphorylation. Interacts with integrin ITGB1; the interaction displaces tensin TNS3 from the ITGB1 cytoplasmic tail and promotes ITGB1 stability. Interacts (via SH2 domain) with E3 ubiquitin-protein ligase CBL (phosphorylated on 'Tyr-774'); the interaction is enhanced in the presence of EGF and reduces interaction of CBL with EGFR. Interacts (via SH2 domain) with receptor tyrosine kinase MET (when phosphorylated); the interaction increases MET protein stability. Proteolytically cleaved by caspase-3 during apoptosis. In terms of tissue distribution, expressed at low levels in colon (at protein level). Expressed in prostate and placenta.

The protein resides in the cell junction. It is found in the focal adhesion. The protein localises to the cytoplasm. Its subcellular location is the cytoskeleton. Promotes EGF-induced cell migration by displacing tensin TNS3 from the cytoplasmic tail of integrin ITGB1 which results in dissociation of TNS3 from focal adhesions, disassembly of actin stress fibers and initiation of cell migration. Suppresses ligand-induced degradation of EGFR by reducing EGFR ubiquitination in the presence of EGF. Increases MET protein stability by inhibiting MET endocytosis and subsequent lysosomal degradation which leads to increased cell survival, proliferation and migration. The chain is Tensin-4 (TNS4) from Homo sapiens (Human).